Reading from the N-terminus, the 403-residue chain is S-adenosylmethionine synthase (403 aa).

Histidine 22 provides a ligand contact to ATP. Aspartate 24 lines the Mg(2+) pocket. A K(+)-binding site is contributed by glutamate 50. 2 residues coordinate L-methionine: glutamate 63 and glutamine 107. Residues 107–117 are flexible loop; the sequence is QSPDIAMGVDK. Residues 182-184, 248-249, aspartate 257, 263-264, alanine 280, and lysine 284 contribute to the ATP site; these read DAK, RF, and RK. An L-methionine-binding site is contributed by aspartate 257. Lysine 288 is an L-methionine binding site.

This sequence belongs to the AdoMet synthase family. In terms of assembly, homotetramer; dimer of dimers. Requires Mg(2+) as cofactor. It depends on K(+) as a cofactor.

It is found in the cytoplasm. It catalyses the reaction L-methionine + ATP + H2O = S-adenosyl-L-methionine + phosphate + diphosphate. Its pathway is amino-acid biosynthesis; S-adenosyl-L-methionine biosynthesis; S-adenosyl-L-methionine from L-methionine: step 1/1. Functionally, catalyzes the formation of S-adenosylmethionine (AdoMet) from methionine and ATP. The overall synthetic reaction is composed of two sequential steps, AdoMet formation and the subsequent tripolyphosphate hydrolysis which occurs prior to release of AdoMet from the enzyme. This chain is S-adenosylmethionine synthase, found in Chloroflexus aurantiacus (strain ATCC 29366 / DSM 635 / J-10-fl).